A 357-amino-acid chain; its full sequence is Putative DENN domain-containing protein 10 B (357 aa).

A uDENN domain is found at 1–140; the sequence is MAAAELADTQ…TKGICQSEEN (140 aa). Positions 159 to 299 constitute a cDENN domain; that stretch reads IKDIVSQFGM…PEKSESQVIQ (141 aa). Residues 301 to 357 form the dDENN domain; that stretch reads IALKTREIFTNLAPFSEVSADGEKRVLNLEALKQKRFPPATENFLYHLAAAEQMLKI.

Belongs to the DENND10 family.

Its subcellular location is the late endosome. In terms of biological role, may be a guanine nucleotide exchange factor (GEF). The sequence is that of Putative DENN domain-containing protein 10 B from Homo sapiens (Human).